The following is a 256-amino-acid chain: MAPGKKVAPAPFGAKSTKSNKTRNPLTHSTPKNFGIGQAVQPKRNLSRYVKWPEYVRVQRQKKILSIRLKVPPTIAQFQYTLDRNTAAETFKLFNKYRPETAAEKKERLTKEAAAVAEGKSKQDASPKPYAVKYGLNHVVALIENKKAKLVLIANDVDPIELVVFLPALCKKMGVPYAIVKGKARLGTLVNQKTSAVAALTEVRAEDEAALAKLVSTIDANFADKYDEVKKHWGGGILGNKAQAKMDKRAKNSDSA.

A disordered region spans residues 1–37 (MAPGKKVAPAPFGAKSTKSNKTRNPLTHSTPKNFGIG). Positions 16–32 (STKSNKTRNPLTHSTPK) are enriched in polar residues.

Belongs to the eukaryotic ribosomal protein eL8 family. Component of the large ribosomal subunit (LSU). Mature yeast ribosomes consist of a small (40S) and a large (60S) subunit. The 40S small subunit contains 1 molecule of ribosomal RNA (18S rRNA) and 33 different proteins (encoded by 57 genes). The large 60S subunit contains 3 rRNA molecules (25S, 5.8S and 5S rRNA) and 46 different proteins (encoded by 81 genes).

It is found in the cytoplasm. Its function is as follows. Component of the ribosome, a large ribonucleoprotein complex responsible for the synthesis of proteins in the cell. The small ribosomal subunit (SSU) binds messenger RNAs (mRNAs) and translates the encoded message by selecting cognate aminoacyl-transfer RNA (tRNA) molecules. The large subunit (LSU) contains the ribosomal catalytic site termed the peptidyl transferase center (PTC), which catalyzes the formation of peptide bonds, thereby polymerizing the amino acids delivered by tRNAs into a polypeptide chain. The nascent polypeptides leave the ribosome through a tunnel in the LSU and interact with protein factors that function in enzymatic processing, targeting, and the membrane insertion of nascent chains at the exit of the ribosomal tunnel. In Saccharomyces cerevisiae (strain ATCC 204508 / S288c) (Baker's yeast), this protein is Large ribosomal subunit protein eL8A.